The chain runs to 351 residues: Phenylacetaldoxime dehydratase (351 aa).

It belongs to the heme-containing dehydratase family. In terms of assembly, monomer. The cofactor is heme b.

The enzyme catalyses (Z)-phenylacetaldehyde oxime = phenylacetonitrile + H2O. Its function is as follows. Catalyzes the stoichiometric dehydration of Z-phenylacetaldoxime to phenylacetonitrile. Prefers the Z-form of phenylacetaldoxime over its E-isomer. This Bacillus sp. (strain OxB-1) protein is Phenylacetaldoxime dehydratase.